The following is a 774-amino-acid chain: Acetyl-CoA decarbonylase/synthase complex subunit alpha (774 aa).

Residues cysteine 73, cysteine 76, cysteine 77, cysteine 79, cysteine 84, and cysteine 94 each contribute to the [4Fe-4S] cluster site. A CO-binding site is contributed by histidine 117. The [Ni-4Fe-4S] cluster site is built by histidine 251, cysteine 279, and cysteine 318. 4Fe-4S ferredoxin-type domains are found at residues 398-427 and 436-466; these read LNEV…VKEA and FKGF…VSMT. The [4Fe-4S] cluster site is built by cysteine 408, cysteine 411, cysteine 414, cysteine 418, cysteine 446, cysteine 449, cysteine 452, and cysteine 456. 3 residues coordinate [Ni-4Fe-4S] cluster: cysteine 514, cysteine 543, and cysteine 578.

Belongs to the Ni-containing carbon monoxide dehydrogenase family. In terms of assembly, heterotetramer of two alpha and two epsilon subunits. The ACDS complex is made up of alpha, epsilon, beta, gamma and delta subunits with a probable stoichiometry of (alpha(2)epsilon(2))(4)-beta(8)-(gamma(1)delta(1))(8). Requires [4Fe-4S] cluster as cofactor. It depends on [Ni-4Fe-4S] cluster as a cofactor.

It carries out the reaction CO + 2 oxidized [2Fe-2S]-[ferredoxin] + H2O = 2 reduced [2Fe-2S]-[ferredoxin] + CO2 + 2 H(+). Its function is as follows. Part of the ACDS complex that catalyzes the reversible cleavage of acetyl-CoA, allowing autotrophic growth from CO(2). The alpha-epsilon subcomponent functions as a carbon monoxide dehydrogenase. The chain is Acetyl-CoA decarbonylase/synthase complex subunit alpha from Methanocaldococcus jannaschii (strain ATCC 43067 / DSM 2661 / JAL-1 / JCM 10045 / NBRC 100440) (Methanococcus jannaschii).